The following is a 473-amino-acid chain: Photosystem II CP43 reaction center protein (473 aa).

Positions 1–14 (MKTLYSLRRFYHVE) are excised as a propeptide. Threonine 15 carries the post-translational modification N-acetylthreonine. Threonine 15 is modified (phosphothreonine). The next 5 helical transmembrane spans lie at 69–93 (LFEV…PHLA), 134–155 (LLGP…KDRN), 178–200 (KALY…RKIT), 255–275 (KPFA…LSYS), and 291–312 (WFNN…ASQA). Glutamate 367 is a [CaMn4O5] cluster binding site. Residues 447–471 (RARAAAAGFEKGIDRDFEPVLSMTP) form a helical membrane-spanning segment.

Belongs to the PsbB/PsbC family. PsbC subfamily. PSII is composed of 1 copy each of membrane proteins PsbA, PsbB, PsbC, PsbD, PsbE, PsbF, PsbH, PsbI, PsbJ, PsbK, PsbL, PsbM, PsbT, PsbX, PsbY, PsbZ, Psb30/Ycf12, at least 3 peripheral proteins of the oxygen-evolving complex and a large number of cofactors. It forms dimeric complexes. It depends on Binds multiple chlorophylls and provides some of the ligands for the Ca-4Mn-5O cluster of the oxygen-evolving complex. It may also provide a ligand for a Cl- that is required for oxygen evolution. PSII binds additional chlorophylls, carotenoids and specific lipids. as a cofactor.

It is found in the plastid. It localises to the chloroplast thylakoid membrane. Its function is as follows. One of the components of the core complex of photosystem II (PSII). It binds chlorophyll and helps catalyze the primary light-induced photochemical processes of PSII. PSII is a light-driven water:plastoquinone oxidoreductase, using light energy to abstract electrons from H(2)O, generating O(2) and a proton gradient subsequently used for ATP formation. This Capsella bursa-pastoris (Shepherd's purse) protein is Photosystem II CP43 reaction center protein.